Consider the following 717-residue polypeptide: Methionine--tRNA ligase (717 aa).

Residues 19 to 29 (PYANGDLHVGH) carry the 'HIGH' region motif. Residues Cys-150, Cys-153, Cys-162, and Cys-166 each contribute to the Zn(2+) site. The 'KMSKS' region motif lies at 356–360 (ALSTS). Thr-359 contacts ATP. Positions 573–603 (ERVEEASEASAEASNEGGEAAGDEVDDGDVD) are disordered. Residues 580-590 (EASAEASNEGG) show a composition bias toward low complexity. Over residues 593 to 603 (AGDEVDDGDVD) the composition is skewed to acidic residues. In terms of domain architecture, tRNA-binding spans 619–717 (DFEGVDMRVG…EDAPLGTRIK (99 aa)).

This sequence belongs to the class-I aminoacyl-tRNA synthetase family. MetG type 1 subfamily. Homodimer. Zn(2+) serves as cofactor.

Its subcellular location is the cytoplasm. It catalyses the reaction tRNA(Met) + L-methionine + ATP = L-methionyl-tRNA(Met) + AMP + diphosphate. Functionally, is required not only for elongation of protein synthesis but also for the initiation of all mRNA translation through initiator tRNA(fMet) aminoacylation. This Haloarcula marismortui (strain ATCC 43049 / DSM 3752 / JCM 8966 / VKM B-1809) (Halobacterium marismortui) protein is Methionine--tRNA ligase.